The sequence spans 248 residues: Probable transcriptional regulatory protein BT_2363 (248 aa).

This sequence belongs to the TACO1 family.

The protein localises to the cytoplasm. The chain is Probable transcriptional regulatory protein BT_2363 from Bartonella tribocorum (strain CIP 105476 / IBS 506).